Here is a 216-residue protein sequence, read N- to C-terminus: Ephrin-A1 (216 aa).

A signal peptide spans 1–28 (MMELYRAAVQLIVGVGLGVGLWLREAQG). One can recognise an Ephrin RBD domain in the interval 29-161 (ERHIVFWNSS…RLRVHVSGRT (133 aa)). The N-linked (GlcNAc...) asparagine glycan is linked to asparagine 36. Cysteine 61 and cysteine 102 are oxidised to a cystine. The disordered stretch occupies residues 162–181 (TPPPVNVHTPRSHIQSDEPE). Serine 195 carries GPI-anchor amidated serine lipidation. Positions 196-216 (AAPGTPCTLYGLLLAALLLRL) are cleaved as a propeptide — removed in mature form.

It belongs to the ephrin family. As to quaternary structure, binds to the receptor tyrosine kinases EPHA2, EPHA4, EPHA5, EPHA6 and EPHA7. Also binds with low affinity to EPHA1.

It is found in the membrane. In terms of biological role, cell surface GPI-bound ligand for Eph receptors, a family of receptor tyrosine kinases which are crucial for migration, repulsion and adhesion during neuronal, vascular and epithelial development. Binds promiscuously Eph receptors residing on adjacent cells, leading to contact-dependent bidirectional signaling into neighboring cells. This chain is Ephrin-A1 (efna1), found in Xenopus laevis (African clawed frog).